The primary structure comprises 455 residues: tRNA modification GTPase MnmE (455 aa).

3 residues coordinate (6S)-5-formyl-5,6,7,8-tetrahydrofolate: Arg23, Glu85, and Arg124. The TrmE-type G domain occupies 220–375 (GVSVVIAGKP…LQDAIFEAFI (156 aa)). Asn230 provides a ligand contact to K(+). Residues 230 to 235 (NVGKSS), 249 to 255 (TSVPGTT), and 274 to 277 (DTAG) each bind GTP. A Mg(2+)-binding site is contributed by Ser234. K(+) is bound by residues Thr249, Val251, and Thr254. Thr255 contributes to the Mg(2+) binding site. Lys455 is a (6S)-5-formyl-5,6,7,8-tetrahydrofolate binding site.

The protein belongs to the TRAFAC class TrmE-Era-EngA-EngB-Septin-like GTPase superfamily. TrmE GTPase family. As to quaternary structure, homodimer. Heterotetramer of two MnmE and two MnmG subunits. K(+) is required as a cofactor.

The protein resides in the cytoplasm. Its function is as follows. Exhibits a very high intrinsic GTPase hydrolysis rate. Involved in the addition of a carboxymethylaminomethyl (cmnm) group at the wobble position (U34) of certain tRNAs, forming tRNA-cmnm(5)s(2)U34. The chain is tRNA modification GTPase MnmE from Geotalea uraniireducens (strain Rf4) (Geobacter uraniireducens).